The following is a 318-amino-acid chain: Small ribosomal subunit protein uS2 (318 aa).

This sequence belongs to the universal ribosomal protein uS2 family.

This is Small ribosomal subunit protein uS2 from Mesomycoplasma hyopneumoniae (strain J / ATCC 25934 / NCTC 10110) (Mycoplasma hyopneumoniae).